The primary structure comprises 543 residues: Splicing factor U2af large subunit B (543 aa).

Over residues 1–10 the composition is skewed to gly residues; that stretch reads MADDNGGGGD. A disordered region spans residues 1–171; it reads MADDNGGGGD…IPTPSQLPGS (171 aa). 2 stretches are compositionally biased toward basic and acidic residues: residues 17 to 78 and 88 to 114; these read VRPE…DRDR and EHRD…ERDG. Residues 115-126 show a composition bias toward basic residues; that stretch reads HRRHRSRSRSRS. RRM domains are found at residues 207 to 290, 327 to 405, and 446 to 532; these read RRVY…RPTD, DRIF…RANQ, and QVVT…YPEN.

Belongs to the splicing factor SR family.

It localises to the nucleus. Its function is as follows. Necessary for the splicing of pre-mRNA. The polypeptide is Splicing factor U2af large subunit B (U2AF65B) (Triticum aestivum (Wheat)).